A 172-amino-acid chain; its full sequence is Cytochrome c oxidase subunit 4 isoform 2, mitochondrial (172 aa).

Residues 1 to 18 (MFSRATRSLVMKTGGLRT) constitute a mitochondrion transit peptide. A disordered region spans residues 1–33 (MFSRATRSLVMKTGGLRTQGTHSPGSAASSSQR). Positions 16–33 (LRTQGTHSPGSAASSSQR) are enriched in polar residues. Over 19–101 (QGTHSPGSAA…TFAEMNHRSN (83 aa)) the chain is Mitochondrial matrix. The helical transmembrane segment at 102–127 (EWKTVMGCVFFFIGFTALVIWWQRVY) threads the bilayer. Over 128 to 172 (VFPKKVVTLTEERKAQQLQRLLDMKSNPIQGLSAHWDYEKKEWKK) the chain is Mitochondrial intermembrane.

The protein belongs to the cytochrome c oxidase IV family. As to quaternary structure, component of the cytochrome c oxidase (complex IV, CIV), a multisubunit enzyme composed of 14 subunits. The complex is composed of a catalytic core of 3 subunits MT-CO1, MT-CO2 and MT-CO3, encoded in the mitochondrial DNA, and 11 supernumerary subunits COX4I, COX5A, COX5B, COX6A, COX6B, COX6C, COX7A, COX7B, COX7C, COX8 and NDUFA4, which are encoded in the nuclear genome. The complex exists as a monomer or a dimer and forms supercomplexes (SCs) in the inner mitochondrial membrane with NADH-ubiquinone oxidoreductase (complex I, CI) and ubiquinol-cytochrome c oxidoreductase (cytochrome b-c1 complex, complex III, CIII), resulting in different assemblies (supercomplex SCI(1)III(2)IV(1) and megacomplex MCI(2)III(2)IV(2)). As to expression, highly expressed in lung.

It localises to the mitochondrion inner membrane. It functions in the pathway energy metabolism; oxidative phosphorylation. In terms of biological role, component of the cytochrome c oxidase, the last enzyme in the mitochondrial electron transport chain which drives oxidative phosphorylation. The respiratory chain contains 3 multisubunit complexes succinate dehydrogenase (complex II, CII), ubiquinol-cytochrome c oxidoreductase (cytochrome b-c1 complex, complex III, CIII) and cytochrome c oxidase (complex IV, CIV), that cooperate to transfer electrons derived from NADH and succinate to molecular oxygen, creating an electrochemical gradient over the inner membrane that drives transmembrane transport and the ATP synthase. Cytochrome c oxidase is the component of the respiratory chain that catalyzes the reduction of oxygen to water. Electrons originating from reduced cytochrome c in the intermembrane space (IMS) are transferred via the dinuclear copper A center (CU(A)) of subunit 2 and heme A of subunit 1 to the active site in subunit 1, a binuclear center (BNC) formed by heme A3 and copper B (CU(B)). The BNC reduces molecular oxygen to 2 water molecules using 4 electrons from cytochrome c in the IMS and 4 protons from the mitochondrial matrix. The protein is Cytochrome c oxidase subunit 4 isoform 2, mitochondrial (Cox4i2) of Rattus norvegicus (Rat).